Here is a 128-residue protein sequence, read N- to C-terminus: uncharacterized protein (128 aa).

This is an uncharacterized protein from Archaeoglobus fulgidus (strain ATCC 49558 / DSM 4304 / JCM 9628 / NBRC 100126 / VC-16).